Here is a 617-residue protein sequence, read N- to C-terminus: Solute carrier family 2, facilitated glucose transporter member 12 (617 aa).

Positions 1-29 (MVPVENTEGPSLLNQKGTAVETEGSGSRH) are disordered. Residues 1-44 (MVPVENTEGPSLLNQKGTAVETEGSGSRHPPWARGCGMFTFLSS) are Cytoplasmic-facing. A compositionally biased stretch (polar residues) spans 8–17 (EGPSLLNQKG). Residues 45–65 (VTAAVSGLLVGYELGIISGAL) traverse the membrane as a helical segment. At 66–80 (LQIKTLLALSCHEQE) the chain is on the extracellular side. Residues 81–101 (MVVSSLVIGALLASLTGGVLI) traverse the membrane as a helical segment. Residues 102-115 (DRYGRRTAIILSSC) lie on the Cytoplasmic side of the membrane. Residues 116–136 (LLGLGSLVLILSLSYTVLIVG) traverse the membrane as a helical segment. Position 137 (R137) is a topological domain, extracellular. Residues 138–158 (IAIGVSISLSSIATCVYIAEI) form a helical membrane-spanning segment. Over 159 to 172 (APQHRRGLLVSLNE) the chain is Cytoplasmic. Residues 173-193 (LMIVIGILSAYISNYAFANVF) traverse the membrane as a helical segment. At 194–197 (HGWK) the chain is on the extracellular side. Residues 198-218 (YMFGLVIPLGVLQAIAMYFLP) traverse the membrane as a helical segment. The Cytoplasmic segment spans residues 219–278 (PSPRFLVMKGQEGAASKVLGRLRALSDTTEELTVIKSSLKDEYQYSFWDLFRSKDNMRTR). A helical transmembrane segment spans residues 279–299 (IMIGLTLVFFVQITGQPNILF). Residues 300 to 317 (YASTVLKSVGFQSNEAAS) are Extracellular-facing. The chain crosses the membrane as a helical span at residues 318 to 338 (LASTGVGVVKVISTIPATLLV). Residues 339-345 (DHVGSKT) are Cytoplasmic-facing. The helical transmembrane segment at 346–366 (FLCIGSSVMAASLVTMGIVNL) threads the bilayer. Topologically, residues 367 to 466 (NIHMNFTHIC…PAFLKWLSLA (100 aa)) are extracellular. Residues N371, N383, N396, and N401 are each glycosylated (N-linked (GlcNAc...) asparagine). Residues 467-487 (SLLVYVAAFSIGLGPMPWLVL) traverse the membrane as a helical segment. The Cytoplasmic portion of the chain corresponds to 488–498 (SEIFPGGIRGR). The helical transmembrane segment at 499 to 519 (AMALTSSMNWGINLLISLTFL) threads the bilayer. At 520-528 (TVTDLIGLP) the chain is on the extracellular side. A helical transmembrane segment spans residues 529-549 (WVCFIYTIMSLASLLFVVMFI). The Cytoplasmic portion of the chain corresponds to 550–617 (PETKGCSLEQ…GQSRQLSPET (68 aa)).

Belongs to the major facilitator superfamily. Sugar transporter (TC 2.A.1.1) family. Glucose transporter subfamily. As to expression, predominantly expressed in skeletal muscle, heart and prostate, with lower levels in brain, placenta and kidney.

The protein resides in the cell membrane. It is found in the endomembrane system. The protein localises to the cytoplasm. It localises to the perinuclear region. The catalysed reaction is D-glucose(out) = D-glucose(in). Insulin-independent facilitative glucose transporter. This is Solute carrier family 2, facilitated glucose transporter member 12 from Homo sapiens (Human).